Here is a 75-residue protein sequence, read N- to C-terminus: Porwaprin-b (75 aa).

The first 24 residues, 1–24 (MSSGGLLLLLGLLTLWAELTPVSG), serve as a signal peptide directing secretion. Positions 27 to 72 (RPVKPGLCPPRPQKPPCVKECKNDWSCRGEQKCCHYGCIYECRDPI) constitute a WAP domain. Disulfide bonds link cysteine 34-cysteine 60, cysteine 43-cysteine 64, cysteine 47-cysteine 59, and cysteine 53-cysteine 68.

The protein belongs to the venom waprin family. As to expression, expressed by the venom gland.

It is found in the secreted. Its function is as follows. Damages membranes of susceptible bacteria. Has no hemolytic activity. Not toxic to mice. Does not inhibit the proteinases elastase and cathepsin G. This is Porwaprin-b from Pseudechis porphyriacus (Red-bellied black snake).